The following is a 66-amino-acid chain: ISGKELQEMSTEGSKYVNKEIKNALKEVLQIKLVMEQGREQSSVMNVMPFPLLEPLNFHDVFQPFY.

This sequence belongs to the clusterin family. Antiparallel disulfide-linked heterodimer of an alpha chain and a beta chain. Self-associates and forms higher oligomers. Interacts with a broad range of misfolded proteins, including APP, APOC2 and LYZ. Slightly acidic pH promotes interaction with misfolded proteins. Forms high-molecular weight oligomers upon interaction with misfolded proteins. Interacts with APOA1, LRP2, CLUAP1 and PON1. Interacts with the complement membrane attack complex. Interacts (via alpha chain) with XRCC6. Interacts with SYVN1, COMMD1, BTRC, CUL1 and with ubiquitin and SCF (SKP1-CUL1-F-box protein) E3 ubiquitin-protein ligase complexes. Interacts (via alpha chain) with BAX in stressed cells, where BAX undergoes a conformation change leading to association with the mitochondrial membrane. Does not interact with BAX in unstressed cells. Found in a complex with LTF, CLU, EPPIN and SEMG1. Interacts (immaturely glycosylated pre-secreted form) with HSPA5; this interaction promotes CLU stability and facilitates stress-induced CLU retrotranslocation from the secretory pathway to the mitochondria, thereby reducing stress-induced apoptosis by stabilizing mitochondrial membrane integrity. Interacts with BCL2L1; this interaction releases and activates BAX and promotes cell death. Interacts with TGFBR2 and ACVR1. Interacts (secreted form) with STMN3; this interaction may act as an important modulator during neuronal differentiation. Component of a epididymal complex at least composed of soluble form of prion protein PRNP, CLU, BPI, CES5A, MANBA and GLB1. In terms of processing, proteolytically cleaved on its way through the secretory system, probably within the Golgi lumen. Proteolytic cleavage is not necessary for its chaperone activity. All non-secreted forms are not proteolytically cleaved. Chaperone activity of uncleaved forms is dependent on a non-reducing environment. Post-translationally, polyubiquitinated, leading to proteasomal degradation. Under cellular stress, the intracellular level of cleaved form is reduced due to proteasomal degradation. Heavily N-glycosylated. About 30% of the protein mass is comprised of complex N-linked carbohydrate. Endoplasmic reticulum (ER) stress induces changes in glycosylation status and increases level of hypoglycosylated forms. Core carbohydrates are essential for chaperone activity. Non-secreted forms are hypoglycosylated or unglycosylated.

It localises to the secreted. It is found in the nucleus. The protein localises to the cytoplasm. Its subcellular location is the mitochondrion membrane. The protein resides in the cytosol. It localises to the microsome. It is found in the endoplasmic reticulum. The protein localises to the mitochondrion. Its subcellular location is the perinuclear region. The protein resides in the cytoplasmic vesicle. It localises to the secretory vesicle. It is found in the chromaffin granule. In terms of biological role, functions as extracellular chaperone that prevents aggregation of non native proteins. Prevents stress-induced aggregation of blood plasma proteins. Inhibits formation of amyloid fibrils by APP, APOC2, B2M, CALCA, CSN3, SNCA and aggregation-prone LYZ variants (in vitro). Does not require ATP. Maintains partially unfolded proteins in a state appropriate for subsequent refolding by other chaperones, such as HSPA8/HSC70. Does not refold proteins by itself. Binding to cell surface receptors triggers internalization of the chaperone-client complex and subsequent lysosomal or proteasomal degradation. When secreted, protects cells against apoptosis and against cytolysis by complement: inhibits assembly of the complement membrane attack complex (MAC) by preventing polymerization of C9 pore component of the MAC complex. Intracellular forms interact with ubiquitin and SCF (SKP1-CUL1-F-box protein) E3 ubiquitin-protein ligase complexes and promote the ubiquitination and subsequent proteasomal degradation of target proteins. Promotes proteasomal degradation of COMMD1 and IKBKB. Modulates NF-kappa-B transcriptional activity. Following stress, promotes apoptosis. Inhibits apoptosis when associated with the mitochondrial membrane by interference with BAX-dependent release of cytochrome c into the cytoplasm. Plays a role in the regulation of cell proliferation. An intracellular form suppresses stress-induced apoptosis by stabilizing mitochondrial membrane integrity through interaction with HSPA5. Secreted form does not affect caspase or BAX-mediated intrinsic apoptosis and TNF-induced NF-kappa-B-activity. Secreted form act as an important modulator during neuronal differentiation through interaction with STMN3. Plays a role in the clearance of immune complexes that arise during cell injury. This Ovis aries (Sheep) protein is Clusterin (CLU).